Consider the following 403-residue polypeptide: Glyceraldehyde-3-phosphate dehydrogenase A, chloroplastic (403 aa).

The transit peptide at 1 to 66 directs the protein to the chloroplast; sequence MASSMLSATT…GGPRRAPTEA (66 aa). NADP(+)-binding positions include 77–78, D102, and R147; that span reads RI. Residues 219 to 221, T250, R265, 278 to 279, and R301 each bind D-glyceraldehyde 3-phosphate; these read SCT and TG. The active-site Nucleophile is C220. N383 is an NADP(+) binding site.

The protein belongs to the glyceraldehyde-3-phosphate dehydrogenase family. In terms of assembly, tetramer of either four A chains (GAPDH 2) or two A and two B chains (GAPDH 1).

The protein localises to the plastid. The protein resides in the chloroplast. It carries out the reaction D-glyceraldehyde 3-phosphate + phosphate + NADP(+) = (2R)-3-phospho-glyceroyl phosphate + NADPH + H(+). Its pathway is carbohydrate biosynthesis; Calvin cycle. In Zea mays (Maize), this protein is Glyceraldehyde-3-phosphate dehydrogenase A, chloroplastic (GAPA).